Here is a 247-residue protein sequence, read N- to C-terminus: Oil body-associated protein 2B (247 aa).

The disordered stretch occupies residues 1-28; that stretch reads MASSDKVPVACPASSGDGKEPMGNPTKT.

Belongs to the OBAP family.

This Arabidopsis thaliana (Mouse-ear cress) protein is Oil body-associated protein 2B.